Reading from the N-terminus, the 656-residue chain is DNA ligase (656 aa).

NAD(+) contacts are provided by residues 32–36 and 81–82; these read DAVYD and SL. The N6-AMP-lysine intermediate role is filled by K112. Residues R133, E167, and K306 each contribute to the NAD(+) site. Residues C400, C403, C416, and C421 each contribute to the Zn(2+) site. The BRCT domain maps to 577-656; sequence KSSSVFSDKT…ELLKRLKELD (80 aa).

The protein belongs to the NAD-dependent DNA ligase family. LigA subfamily. Mg(2+) is required as a cofactor. Mn(2+) serves as cofactor.

It catalyses the reaction NAD(+) + (deoxyribonucleotide)n-3'-hydroxyl + 5'-phospho-(deoxyribonucleotide)m = (deoxyribonucleotide)n+m + AMP + beta-nicotinamide D-nucleotide.. DNA ligase that catalyzes the formation of phosphodiester linkages between 5'-phosphoryl and 3'-hydroxyl groups in double-stranded DNA using NAD as a coenzyme and as the energy source for the reaction. It is essential for DNA replication and repair of damaged DNA. This chain is DNA ligase, found in Helicobacter pylori (strain J99 / ATCC 700824) (Campylobacter pylori J99).